Consider the following 360-residue polypeptide: Phosphoserine aminotransferase (360 aa).

R42 provides a ligand contact to L-glutamate. Pyridoxal 5'-phosphate-binding positions include 76–77, W102, T152, D172, and Q195; that span reads AS. Position 196 is an N6-(pyridoxal phosphate)lysine (K196). Residue 237 to 238 coordinates pyridoxal 5'-phosphate; sequence NT.

The protein belongs to the class-V pyridoxal-phosphate-dependent aminotransferase family. SerC subfamily. As to quaternary structure, homodimer. Requires pyridoxal 5'-phosphate as cofactor.

The protein localises to the cytoplasm. The enzyme catalyses O-phospho-L-serine + 2-oxoglutarate = 3-phosphooxypyruvate + L-glutamate. The catalysed reaction is 4-(phosphooxy)-L-threonine + 2-oxoglutarate = (R)-3-hydroxy-2-oxo-4-phosphooxybutanoate + L-glutamate. The protein operates within amino-acid biosynthesis; L-serine biosynthesis; L-serine from 3-phospho-D-glycerate: step 2/3. Its function is as follows. Catalyzes the reversible conversion of 3-phosphohydroxypyruvate to phosphoserine and of 3-hydroxy-2-oxo-4-phosphonooxybutanoate to phosphohydroxythreonine. This chain is Phosphoserine aminotransferase, found in Bacillus thuringiensis subsp. konkukian (strain 97-27).